The following is a 486-amino-acid chain: NADH dehydrogenase [ubiquinone] flavoprotein 1, mitochondrial (486 aa).

Residues 1–30 (MAPVRGILGLQRAVSIWKESNRLTPALRSF) constitute a mitochondrion transit peptide. Residues 31–40 (STQAASTSTT) show a composition bias toward low complexity. Residues 31 to 57 (STQAASTSTTPQPPPPPPPPEKTHFGG) are disordered. Residues 41–50 (PQPPPPPPPP) are compositionally biased toward pro residues. Residue 110–119 (GRGGAGFPSG) participates in NADH binding. FMN is bound at residue 222 to 270 (FGAGAYICGEETALLESLEGKQGKPRLKPPFPANAGLYGCPTTVTNVET). [4Fe-4S] cluster-binding residues include Cys402, Cys405, Cys408, and Cys448.

This sequence belongs to the complex I 51 kDa subunit family. Complex I is composed of at least 49 different subunits. This is a component of the flavoprotein-sulfur (FP) fragment of the enzyme. It depends on FMN as a cofactor. [4Fe-4S] cluster serves as cofactor.

It is found in the mitochondrion inner membrane. It catalyses the reaction a ubiquinone + NADH + 5 H(+)(in) = a ubiquinol + NAD(+) + 4 H(+)(out). In terms of biological role, core subunit of the mitochondrial membrane respiratory chain NADH dehydrogenase (Complex I) that is believed to belong to the minimal assembly required for catalysis. Complex I functions in the transfer of electrons from NADH to the respiratory chain. The immediate electron acceptor for the enzyme is believed to be ubiquinone. The chain is NADH dehydrogenase [ubiquinone] flavoprotein 1, mitochondrial from Arabidopsis thaliana (Mouse-ear cress).